Reading from the N-terminus, the 734-residue chain is MLLQNLALKKGKEAAGHNIQSLTKHGNYFVQSSDRRRAYTSNQSAADKVREELAKETCEKLSSQHQAKKKAKAIDRDFFLSVLGSSATKREARSYIQNFKPLNTSPAKPISQEPVHKNTNENGANLGSIYTATRAVAESPKFVQQPAVSQSTLGGSILHVALVKVRAPQLLDDETLNGIGKTLSKLCRLGLISTVVVDCEDGTDTHLKVSECEWRNRIKEQAARVVTAIDASGTEARLVDNVIGIAEDGSDVKQQPYLKGGVHVTFRELLMTPLRRGVLPVLPSIGHTDATQTAVSITASDVVLALTREFAGFRSPQSPDEHPNVVKEHLQALQNEVSLDRLILIDPLGGIPASDRRNGYHVFLNMEQEYEQAKQDLIKTGGLYSETSSRSTRAEADSNFNLRDDIPLSSFTEQKSGELEYSPRHQNDSPTQQDQRMKFHLDNLELVRSALAILPPSSSALVTTPDEAANSGKQHEFKAAGVGTRRQRNPLIHNLLTDKPAFSSSLPAGRLGPLDKNEPITPSTKLAPATFAKHGMPVTIFPDPKTTPWQPPIAGVPQISLTDPQIDLPRLVHLIEDSFNKKLDVQDYLRRVNNRIAGVIIAGEYEGGALLTWELPPGVPDDGSEESRKRMVPYLDKFAVLKRSQGSGGVADVVFKSMVRDCFPGGVCWRSRKDNPVNKWYFERSRATLKLMDTNWTMFFTTPEENMDQQTFQDYEAVCKTIEPSWADKQGVQD.

Residues 384-433 (YSETSSRSTRAEADSNFNLRDDIPLSSFTEQKSGELEYSPRHQNDSPTQQ) form a disordered region. Composition is skewed to basic and acidic residues over residues 392-406 (TRAE…RDDI) and 415-427 (KSGE…RHQN). The N-acetyltransferase domain occupies 555–724 (GVPQISLTDP…YEAVCKTIEP (170 aa)).

This sequence belongs to the acetyltransferase family.

The protein resides in the mitochondrion. It catalyses the reaction L-glutamate + acetyl-CoA = N-acetyl-L-glutamate + CoA + H(+). Its pathway is amino-acid biosynthesis; L-arginine biosynthesis; N(2)-acetyl-L-ornithine from L-glutamate: step 1/4. In terms of biological role, N-acetylglutamate synthase involved in arginine biosynthesis. This is Amino-acid acetyltransferase, mitochondrial (arg2) from Botryotinia fuckeliana (strain B05.10) (Noble rot fungus).